The primary structure comprises 251 residues: Adenosine 5'-phosphosulfate reductase (251 aa).

Residues Cys121, Cys122, Cys204, and Cys207 each coordinate [4Fe-4S] cluster. Cys232 serves as the catalytic Nucleophile; cysteine thiosulfonate intermediate.

It belongs to the PAPS reductase family. CysH subfamily. It depends on [4Fe-4S] cluster as a cofactor.

Its subcellular location is the cytoplasm. It catalyses the reaction [thioredoxin]-disulfide + sulfite + AMP + 2 H(+) = adenosine 5'-phosphosulfate + [thioredoxin]-dithiol. The protein operates within sulfur metabolism; hydrogen sulfide biosynthesis; sulfite from sulfate. In terms of biological role, catalyzes the formation of sulfite from adenosine 5'-phosphosulfate (APS) using thioredoxin as an electron donor. This is Adenosine 5'-phosphosulfate reductase from Sinorhizobium fredii (strain NBRC 101917 / NGR234).